The following is a 458-amino-acid chain: Transmembrane protein 143 (458 aa).

A run of 2 helical transmembrane segments spans residues 277 to 297 (LLNLMLVVSGVMIFVNVGMVI) and 298 to 318 (LSDLKMATSLLLLLFAAFMGV). Ser329 is modified (phosphoserine).

It is found in the membrane. The protein is Transmembrane protein 143 (Tmem143) of Mus musculus (Mouse).